We begin with the raw amino-acid sequence, 331 residues long: Protein Brevis radix-like 1 (331 aa).

The tract at residues 1–111 is disordered; it reads MFTCINCTKM…HQSGRPDSRF (111 aa). Polar residues-rich tracts occupy residues 25 to 41 and 48 to 66; these read STTPNTKEAVKSLTTQI and FSGSHKQSKPTPGSSSSNL. In terms of domain architecture, BRX 1 spans 137–192; that stretch reads KEWMAQVEPGVHITFVSLPSGGNDLKRIRFSREVFDKWQAQRWWGENYDRIVELYN. Disordered stretches follow at residues 201–246 and 258–279; these read LQTP…VPHH and TTSSRDEPPSMSNASEMQGEWV. Residues 221 to 235 are compositionally biased toward basic and acidic residues; the sequence is DSARESRDWTQRDNN. The BRX 2 domain maps to 276–331; that stretch reads GEWVEEDEPGVYITIRQLPDGTRELRRVRFSRERFGEVHAKTWWEQNRDRIQTQYL.

Belongs to the BRX family. As to quaternary structure, heterodimer with BRXL1. As to expression, expressed in roots.

The protein localises to the nucleus. Its function is as follows. May act as a regulator of cell proliferation and elongation in the root. This chain is Protein Brevis radix-like 1 (BRXL1), found in Arabidopsis thaliana (Mouse-ear cress).